Here is a 291-residue protein sequence, read N- to C-terminus: MTHFDKPTYTVRKTRKKEIPQGVYTKDPVSGEAVFTKDIADNQMVVPASGHHFPIGARERLGYLLDPGSFVESNIEVRSADPLQFVDSAPYPARIKKYEKESGLPEAVVTGAGKIHGVPVSLAVMDFRFCGGTLGSAAGEKITRAIETAIAQKIPCIIFSTSGGARMQEGILSLMQMAKTSAALGRLAAARLPYISVLTHPTTGGVSASYATLGDVILAEPGALIGFAGPRVIKDTTKQTLPPGFQTSEFLLKHGLIDQIVPRTEMRERLHQILLALYVKQTPASASVAKS.

A CoA carboxyltransferase N-terminal domain is found at 23-291 (VYTKDPVSGE…TPASASVAKS (269 aa)).

It belongs to the AccD/PCCB family. In terms of assembly, acetyl-CoA carboxylase is a heterohexamer composed of biotin carboxyl carrier protein (AccB), biotin carboxylase (AccC) and two subunits each of ACCase subunit alpha (AccA) and ACCase subunit beta (AccD).

The protein resides in the cytoplasm. The catalysed reaction is N(6)-carboxybiotinyl-L-lysyl-[protein] + acetyl-CoA = N(6)-biotinyl-L-lysyl-[protein] + malonyl-CoA. It functions in the pathway lipid metabolism; malonyl-CoA biosynthesis; malonyl-CoA from acetyl-CoA: step 1/1. Component of the acetyl coenzyme A carboxylase (ACC) complex. Biotin carboxylase (BC) catalyzes the carboxylation of biotin on its carrier protein (BCCP) and then the CO(2) group is transferred by the transcarboxylase to acetyl-CoA to form malonyl-CoA. The chain is Acetyl-coenzyme A carboxylase carboxyl transferase subunit beta from Opitutus terrae (strain DSM 11246 / JCM 15787 / PB90-1).